The sequence spans 103 residues: N(4)-acetylcytidine amidohydrolase (103 aa).

Residues 6–101 (ITFFQRFQDD…QTQFYVIEFK (96 aa)) form the ASCH domain. The Proton acceptor role is filled by Lys21. Thr24 acts as the Nucleophile in catalysis. Residue Glu74 is the Proton donor of the active site.

Belongs to the N(4)-acetylcytidine amidohydrolase family.

The catalysed reaction is N(4)-acetylcytidine + H2O = cytidine + acetate + H(+). It carries out the reaction N(4)-acetyl-2'-deoxycytidine + H2O = 2'-deoxycytidine + acetate + H(+). The enzyme catalyses N(4)-acetylcytosine + H2O = cytosine + acetate + H(+). Its function is as follows. Catalyzes the hydrolysis of N(4)-acetylcytidine (ac4C). In Escherichia coli (strain SE11), this protein is N(4)-acetylcytidine amidohydrolase (yqfB).